A 410-amino-acid chain; its full sequence is MALVNEHFLKLPGSYLFSDIAKKVNTFKITHPKRDIIRLGIGDVTRPLPKACIEAMHKAVEEMTSAETFRGYGPEQGYDFLIEAIIKNDYAPRGIHLSPTEVFVNDGAKSDTGNIGDILRHDNSVGVTDPIYPVYIDSNVMCGRAGVLDTESGKWSNVTYMPCTAENHFIPAIPEKRIDIVYLCYPNNPTGTTLTKAELKKWVDYALANDTLILFDAAYEAYIREPDIPHSIYEIKGAKKCAIEFRSFSKTAGFTGVRCGYTVVPKELTAATLEGERIPLNRLWNRRQCTKFNGTSYITQRAAEAIYTPEGKEQIQETINYYMTNARIMKEGLESTGLKVYGGVNAPYLWVKTPNGTSSWRFFDQMLYEANVVGTPGVGFGPSGEGYIRLTAFGERDDCIEAMRRIKNRL.

Substrate contacts are provided by Tyr15 and Gly42. Pyridoxal 5'-phosphate contacts are provided by residues Tyr72, 108 to 109, Tyr132, Asn188, Tyr219, and 247 to 249; these read AK and SFS. Positions 109, 132, and 188 each coordinate substrate. N6-(pyridoxal phosphate)lysine is present on Lys250. Residues Arg258 and Asn293 each contribute to the pyridoxal 5'-phosphate site. Substrate contacts are provided by Asn293 and Arg389.

This sequence belongs to the class-I pyridoxal-phosphate-dependent aminotransferase family. LL-diaminopimelate aminotransferase subfamily. In terms of assembly, homodimer. Pyridoxal 5'-phosphate is required as a cofactor.

The catalysed reaction is (2S,6S)-2,6-diaminopimelate + 2-oxoglutarate = (S)-2,3,4,5-tetrahydrodipicolinate + L-glutamate + H2O + H(+). It functions in the pathway amino-acid biosynthesis; L-lysine biosynthesis via DAP pathway; LL-2,6-diaminopimelate from (S)-tetrahydrodipicolinate (aminotransferase route): step 1/1. Its function is as follows. Involved in the synthesis of meso-diaminopimelate (m-DAP or DL-DAP), required for both lysine and peptidoglycan biosynthesis. Catalyzes the direct conversion of tetrahydrodipicolinate to LL-diaminopimelate. The polypeptide is LL-diaminopimelate aminotransferase (Bacteroides fragilis (strain YCH46)).